The primary structure comprises 585 residues: Protein NRT1/ PTR FAMILY 4.6 (585 aa).

The next 12 helical transmembrane spans lie at 28–48 (GMLAASFVLVVEILENLAYLA), 75–95 (FMGTAFLLALLGGFLSDAFFS), 96–116 (TFQIFLISASIEFLGLIILTI), 142–162 (AMLFVGLYLVALGVGGIKGSL), 184–204 (FFNYFVFCLACGALVAVTFVV), 211–231 (GWEWGFGVSTIAIFVSILIFL), 343–363 (IVLKMLPIFACTIMLNCCLAQ), 391–411 (IFPVVFIMILAPIYDHLIIPF), 428–448 (IGVGLVLSILAMAVAALVEIK), 465–485 (LPVTFLWIALQYLFLGSADLF), 508–528 (SLSWASLAMGYYLSSVIVSIV), and 554–574 (FYWLMCVLSAANFLHYLFWAM).

Belongs to the major facilitator superfamily. Proton-dependent oligopeptide transporter (POT/PTR) (TC 2.A.17) family. Expressed in root hairs and in epidermis of both root tips and mature regions of roots. Detected in shoots, stems, flowers, siliques and imbibed seeds. Expressed in vascular tissues in cotyledons, trus leaves, hypocotyls, roots and inflorescence stems.

It is found in the cell membrane. Functionally, low-affinity proton-dependent nitrate transporter. Involved in constitutive nitrate uptake. Not involved in histidine or dipeptides transport. Involved in (+)-abscisic acid (ABA) transport, but not in gibberellin, indole-3-acetic acid or jasmonic acid import. Mediates cellular ABA uptake. Nitrate does not compete with abscisic acid as a substrate of NPF4.6. The chain is Protein NRT1/ PTR FAMILY 4.6 (NPF4.6) from Arabidopsis thaliana (Mouse-ear cress).